Consider the following 261-residue polypeptide: Putative hydro-lyase Nther_1142 (261 aa).

Belongs to the D-glutamate cyclase family.

This Natranaerobius thermophilus (strain ATCC BAA-1301 / DSM 18059 / JW/NM-WN-LF) protein is Putative hydro-lyase Nther_1142.